The chain runs to 348 residues: Protein DMR6-LIKE OXYGENASE 2 (348 aa).

One can recognise a Fe2OG dioxygenase domain in the interval 194 to 294 (KHGQHMAINY…RISIPTFYCP (101 aa)). Residues histidine 219, aspartate 221, and histidine 275 each contribute to the Fe cation site. Arginine 285 provides a ligand contact to 2-oxoglutarate.

The protein belongs to the iron/ascorbate-dependent oxidoreductase family. It depends on Fe(2+) as a cofactor.

It catalyses the reaction salicylate + NADH + O2 + H(+) = 2,3-dihydroxybenzoate + NAD(+) + H2O. Converts salicylic acid (SA) to 2,3-dihydroxybenzoic acid (2,3-DHBA). Negative regulator of defense against Hyaloperonospora arabidopsidis. Functionally, (Microbial infection) Confers susceptibility to the downy mildew pathogen Hyaloperonospora arabidopsidis. The chain is Protein DMR6-LIKE OXYGENASE 2 from Arabidopsis thaliana (Mouse-ear cress).